We begin with the raw amino-acid sequence, 619 residues long: Dihydroxy-acid dehydratase (619 aa).

Residue aspartate 81 participates in Mg(2+) binding. Cysteine 122 is a binding site for [2Fe-2S] cluster. The Mg(2+) site is built by aspartate 123 and lysine 124. Lysine 124 is subject to N6-carboxylysine. Cysteine 195 contacts [2Fe-2S] cluster. Glutamate 491 provides a ligand contact to Mg(2+). Serine 517 serves as the catalytic Proton acceptor.

The protein belongs to the IlvD/Edd family. Homodimer. It depends on [2Fe-2S] cluster as a cofactor. Mg(2+) serves as cofactor.

The catalysed reaction is (2R)-2,3-dihydroxy-3-methylbutanoate = 3-methyl-2-oxobutanoate + H2O. It catalyses the reaction (2R,3R)-2,3-dihydroxy-3-methylpentanoate = (S)-3-methyl-2-oxopentanoate + H2O. It participates in amino-acid biosynthesis; L-isoleucine biosynthesis; L-isoleucine from 2-oxobutanoate: step 3/4. The protein operates within amino-acid biosynthesis; L-valine biosynthesis; L-valine from pyruvate: step 3/4. Its function is as follows. Functions in the biosynthesis of branched-chain amino acids. Catalyzes the dehydration of (2R,3R)-2,3-dihydroxy-3-methylpentanoate (2,3-dihydroxy-3-methylvalerate) into 2-oxo-3-methylpentanoate (2-oxo-3-methylvalerate) and of (2R)-2,3-dihydroxy-3-methylbutanoate (2,3-dihydroxyisovalerate) into 2-oxo-3-methylbutanoate (2-oxoisovalerate), the penultimate precursor to L-isoleucine and L-valine, respectively. In Sphingopyxis alaskensis (strain DSM 13593 / LMG 18877 / RB2256) (Sphingomonas alaskensis), this protein is Dihydroxy-acid dehydratase.